Consider the following 391-residue polypeptide: Carbamoyl phosphate synthase small chain (391 aa).

The tract at residues 1–202 (MTQPAILVLE…AHASAGSGEE (202 aa)) is CPSase. Residues serine 47, glycine 254, and glycine 256 each coordinate L-glutamine. Residues 206 to 391 (KVVAYDYGVK…RFVDLMAARA (186 aa)) form the Glutamine amidotransferase type-1 domain. The active-site Nucleophile is cysteine 282. Positions 283, 286, 324, 326, and 327 each coordinate L-glutamine. Catalysis depends on residues histidine 366 and glutamate 368.

Belongs to the CarA family. As to quaternary structure, composed of two chains; the small (or glutamine) chain promotes the hydrolysis of glutamine to ammonia, which is used by the large (or ammonia) chain to synthesize carbamoyl phosphate. Tetramer of heterodimers (alpha,beta)4.

The enzyme catalyses hydrogencarbonate + L-glutamine + 2 ATP + H2O = carbamoyl phosphate + L-glutamate + 2 ADP + phosphate + 2 H(+). It catalyses the reaction L-glutamine + H2O = L-glutamate + NH4(+). It participates in amino-acid biosynthesis; L-arginine biosynthesis; carbamoyl phosphate from bicarbonate: step 1/1. It functions in the pathway pyrimidine metabolism; UMP biosynthesis via de novo pathway; (S)-dihydroorotate from bicarbonate: step 1/3. In terms of biological role, small subunit of the glutamine-dependent carbamoyl phosphate synthetase (CPSase). CPSase catalyzes the formation of carbamoyl phosphate from the ammonia moiety of glutamine, carbonate, and phosphate donated by ATP, constituting the first step of 2 biosynthetic pathways, one leading to arginine and/or urea and the other to pyrimidine nucleotides. The small subunit (glutamine amidotransferase) binds and cleaves glutamine to supply the large subunit with the substrate ammonia. The chain is Carbamoyl phosphate synthase small chain from Xanthomonas axonopodis pv. citri (strain 306).